The sequence spans 360 residues: Phospho-N-acetylmuramoyl-pentapeptide-transferase (360 aa).

Helical transmembrane passes span 25–45 (RGIL…PWMI), 73–93 (TMGG…WADL), 97–117 (YVWV…VDDY), 134–154 (YFWQ…TAPT), 168–188 (VTIP…VGSS), 199–219 (GLAI…CYLS), 236–256 (SGEL…FLWF), 263–283 (VFMG…IAVI), 288–308 (IVLF…VIQV), and 338–358 (VIVR…ATLK).

The protein belongs to the glycosyltransferase 4 family. MraY subfamily. Mg(2+) serves as cofactor.

It localises to the cell inner membrane. It catalyses the reaction UDP-N-acetyl-alpha-D-muramoyl-L-alanyl-gamma-D-glutamyl-meso-2,6-diaminopimeloyl-D-alanyl-D-alanine + di-trans,octa-cis-undecaprenyl phosphate = di-trans,octa-cis-undecaprenyl diphospho-N-acetyl-alpha-D-muramoyl-L-alanyl-D-glutamyl-meso-2,6-diaminopimeloyl-D-alanyl-D-alanine + UMP. The protein operates within cell wall biogenesis; peptidoglycan biosynthesis. Its function is as follows. Catalyzes the initial step of the lipid cycle reactions in the biosynthesis of the cell wall peptidoglycan: transfers peptidoglycan precursor phospho-MurNAc-pentapeptide from UDP-MurNAc-pentapeptide onto the lipid carrier undecaprenyl phosphate, yielding undecaprenyl-pyrophosphoryl-MurNAc-pentapeptide, known as lipid I. The protein is Phospho-N-acetylmuramoyl-pentapeptide-transferase of Pseudomonas putida (strain ATCC 700007 / DSM 6899 / JCM 31910 / BCRC 17059 / LMG 24140 / F1).